The following is a 153-amino-acid chain: Bkd operon transcriptional regulator (153 aa).

In terms of domain architecture, HTH asnC-type spans 4-65 (LDRIDLKILR…RLDEERLSGA (62 aa)). Residues 23–42 (WRDLAQKVGLSLTPTLRRVR) constitute a DNA-binding region (H-T-H motif).

Positive regulator of the bkd operon for branched-chain keto acid dehydrogenase complex. This chain is Bkd operon transcriptional regulator (bkdR), found in Pseudomonas aeruginosa (strain ATCC 15692 / DSM 22644 / CIP 104116 / JCM 14847 / LMG 12228 / 1C / PRS 101 / PAO1).